The sequence spans 108 residues: Class I hydrophobin 3 (108 aa).

The first 17 residues, 1–17 (MFSRVFAVASLAALALA), serve as a signal peptide directing secretion. 4 disulfide bridges follow: cysteine 26–cysteine 87, cysteine 33–cysteine 81, cysteine 34–cysteine 67, and cysteine 88–cysteine 101.

Belongs to the fungal hydrophobin family. In terms of assembly, self-assembles to form functional amyloid fibrils called rodlets. Self-assembly into fibrillar rodlets occurs spontaneously at hydrophobic:hydrophilic interfaces and the rodlets further associate laterally to form amphipathic monolayers.

It is found in the secreted. The protein resides in the cell wall. In terms of biological role, aerial growth, conidiation, and dispersal of filamentous fungi in the environment rely upon a capability of their secreting small amphipathic proteins called hydrophobins (HPBs) with low sequence identity. Class I can self-assemble into an outermost layer of rodlet bundles on aerial cell surfaces, conferring cellular hydrophobicity that supports fungal growth, development and dispersal; whereas Class II form highly ordered films at water-air interfaces through intermolecular interactions but contribute nothing to the rodlet structure. This is Class I hydrophobin 3 from Pisolithus tinctorius (Dead man's foot).